We begin with the raw amino-acid sequence, 479 residues long: Small ribosomal subunit protein bS1 (479 aa).

4 consecutive S1 motif domains span residues 36 to 105 (GDIV…LSKK), 123 to 188 (DEAV…LSRR), 209 to 277 (GAIR…LSLK), and 294 to 363 (GQIV…LSLK). Residues 429-466 (TAQMEKFAAAEAEAANAPVSNGSSRSEESSGGTLASDA) are disordered. Over residues 437-460 (AAEAEAANAPVSNGSSRSEESSGG) the composition is skewed to low complexity.

The protein belongs to the bacterial ribosomal protein bS1 family. As to quaternary structure, binds uncharacterized protein MSMEG_2731/MSMEI_2664.

Functionally, binds mRNA, facilitating recognition of most mRNAs by the 30S ribosomal subunit during translation initiation. Plays a role in trans-translation; binds tmRNA (the product of the ssrA gene). Binds very poorly to pyrazinoic acid (POA), the active form of the prodrug pyrazinamide (PZA); POA does not disrupt trans-translation in this organism. M.smegmatis is resistant to the antibiotic PZA. In trans-translation Ala-aminoacylated transfer-messenger RNA (tmRNA, product of the ssrA gene; the 2 termini fold to resemble tRNA(Ala) while it encodes a short internal open reading frame (the tag peptide)) acts like a tRNA, entering the A-site of the ribosome and displacing the stalled mRNA (which is subsequently degraded). The ribosome then switches to translate the ORF on the tmRNA, the nascent peptide is terminated with the 'tag peptide' encoded by the tmRNA and thus targeted for degradation. The chain is Small ribosomal subunit protein bS1 (rpsA) from Mycolicibacterium smegmatis (strain ATCC 700084 / mc(2)155) (Mycobacterium smegmatis).